A 482-amino-acid chain; its full sequence is tRNA-2-methylthio-N(6)-dimethylallyladenosine synthase (482 aa).

The region spanning 3-120 is the MTTase N-terminal domain; the sequence is KKLHIKTWGC…LPEMIKQVQG (118 aa). Positions 12, 49, 83, 158, 162, and 165 each coordinate [4Fe-4S] cluster. Positions 144-376 constitute a Radical SAM core domain; the sequence is KADGPSAFVS…QNRITQMAQQ (233 aa). The TRAM domain occupies 379 to 442; the sequence is RQMFDTEQRI…PNSLRGDLIR (64 aa).

This sequence belongs to the methylthiotransferase family. MiaB subfamily. Monomer. [4Fe-4S] cluster is required as a cofactor.

The protein localises to the cytoplasm. The catalysed reaction is N(6)-dimethylallyladenosine(37) in tRNA + (sulfur carrier)-SH + AH2 + 2 S-adenosyl-L-methionine = 2-methylsulfanyl-N(6)-dimethylallyladenosine(37) in tRNA + (sulfur carrier)-H + 5'-deoxyadenosine + L-methionine + A + S-adenosyl-L-homocysteine + 2 H(+). Functionally, catalyzes the methylthiolation of N6-(dimethylallyl)adenosine (i(6)A), leading to the formation of 2-methylthio-N6-(dimethylallyl)adenosine (ms(2)i(6)A) at position 37 in tRNAs that read codons beginning with uridine. This Pseudoalteromonas translucida (strain TAC 125) protein is tRNA-2-methylthio-N(6)-dimethylallyladenosine synthase.